The primary structure comprises 312 residues: Protein phosphatase PTC7 homolog fig (312 aa).

One can recognise a PPM-type phosphatase domain in the interval 42 to 306 (IQGSSKDQLA…DDITVILASV (265 aa)). The Mn(2+) site is built by aspartate 83, glycine 84, and aspartate 228.

It belongs to the PP2C family. Mg(2+) is required as a cofactor. It depends on Mn(2+) as a cofactor.

It carries out the reaction O-phospho-L-seryl-[protein] + H2O = L-seryl-[protein] + phosphate. The enzyme catalyses O-phospho-L-threonyl-[protein] + H2O = L-threonyl-[protein] + phosphate. This is Protein phosphatase PTC7 homolog fig from Drosophila mojavensis (Fruit fly).